We begin with the raw amino-acid sequence, 146 residues long: Anti-sigma F factor (146 aa).

This sequence belongs to the anti-sigma-factor family.

The enzyme catalyses L-seryl-[protein] + ATP = O-phospho-L-seryl-[protein] + ADP + H(+). The catalysed reaction is L-threonyl-[protein] + ATP = O-phospho-L-threonyl-[protein] + ADP + H(+). Binds to sigma F and blocks its ability to form an RNA polymerase holoenzyme (E-sigma F). Phosphorylates SpoIIAA on a serine residue. This phosphorylation may enable SpoIIAA to act as an anti-anti-sigma factor that counteracts SpoIIAB and thus releases sigma F from inhibition. The sequence is that of Anti-sigma F factor from Halalkalibacterium halodurans (strain ATCC BAA-125 / DSM 18197 / FERM 7344 / JCM 9153 / C-125) (Bacillus halodurans).